A 342-amino-acid chain; its full sequence is UDP-N-acetylglucosamine--N-acetylmuramyl-(pentapeptide) pyrophosphoryl-undecaprenol N-acetylglucosamine transferase (342 aa).

Residues 10 to 12, Asn-124, Ser-177, and Gln-275 each bind UDP-N-acetyl-alpha-D-glucosamine; that span reads TGG.

It belongs to the glycosyltransferase 28 family. MurG subfamily.

Its subcellular location is the cell inner membrane. The enzyme catalyses di-trans,octa-cis-undecaprenyl diphospho-N-acetyl-alpha-D-muramoyl-L-alanyl-D-glutamyl-meso-2,6-diaminopimeloyl-D-alanyl-D-alanine + UDP-N-acetyl-alpha-D-glucosamine = di-trans,octa-cis-undecaprenyl diphospho-[N-acetyl-alpha-D-glucosaminyl-(1-&gt;4)]-N-acetyl-alpha-D-muramoyl-L-alanyl-D-glutamyl-meso-2,6-diaminopimeloyl-D-alanyl-D-alanine + UDP + H(+). It functions in the pathway cell wall biogenesis; peptidoglycan biosynthesis. Cell wall formation. Catalyzes the transfer of a GlcNAc subunit on undecaprenyl-pyrophosphoryl-MurNAc-pentapeptide (lipid intermediate I) to form undecaprenyl-pyrophosphoryl-MurNAc-(pentapeptide)GlcNAc (lipid intermediate II). In Campylobacter jejuni subsp. jejuni serotype O:6 (strain 81116 / NCTC 11828), this protein is UDP-N-acetylglucosamine--N-acetylmuramyl-(pentapeptide) pyrophosphoryl-undecaprenol N-acetylglucosamine transferase.